The sequence spans 293 residues: uncharacterized protein (293 aa).

The active site involves glutamate 47.

It belongs to the PhzF family.

This is an uncharacterized protein from Bacillus subtilis (strain 168).